We begin with the raw amino-acid sequence, 208 residues long: N-(5'-phosphoribosyl)anthranilate isomerase (208 aa).

It belongs to the TrpF family.

The catalysed reaction is N-(5-phospho-beta-D-ribosyl)anthranilate = 1-(2-carboxyphenylamino)-1-deoxy-D-ribulose 5-phosphate. It functions in the pathway amino-acid biosynthesis; L-tryptophan biosynthesis; L-tryptophan from chorismate: step 3/5. The polypeptide is N-(5'-phosphoribosyl)anthranilate isomerase (Nitrosomonas eutropha (strain DSM 101675 / C91 / Nm57)).